Consider the following 202-residue polypeptide: Translation initiation factor 2 subunit beta (202 aa).

Positions 145–202 (AIEEGGTYELRIDAVGSKGDGIAKIDKYTVFVPGATKGDVVKVKIKKISGNLAFSERA) constitute a TRAM domain.

Belongs to the eIF-2-beta/eIF-5 family. Heterotrimer composed of an alpha, a beta and a gamma chain.

Its function is as follows. eIF-2 functions in the early steps of protein synthesis by forming a ternary complex with GTP and initiator tRNA. The chain is Translation initiation factor 2 subunit beta (eif2b) from Methanosarcina mazei (strain ATCC BAA-159 / DSM 3647 / Goe1 / Go1 / JCM 11833 / OCM 88) (Methanosarcina frisia).